A 626-amino-acid polypeptide reads, in one-letter code: MDEQEALDSIMKDLVALQMSRRTRLSGYETMKNKDTGHPNRQSDVRIKFEHNGERRIIAFSRPVRYEDVEHKVTTVFGQPLDLHYMNNELSILLKNQDDLDKAIDILDRSSSMKSLRILLLSQDRNHTSSSPHSGVSRQVRIKPSQSAGDINTIYQAPEPRSRHLSVSSQNPGRSSPPPGYVPERQQHIARQGSYTSINSEGEFIPETSEQCMLDPLSSAENSLSGSCQSLDRSADSPSFRKSQMSRARSFPDNRKECSDRETQLYDKGVKGGTYPRRYHVSVHHKDYNDGRRTFPRIRRHQGNLFTLVPSSRSLSTNGENMGVAVQYLDPRGRLRSADSENALTVQERNVPTKSPSAPINWRRGKLLGQGAFGRVYLCYDVDTGRELASKQVQFDPDSPETSKEVSALECEIQLLKNLQHERIVQYYGCLRDRAEKILTIFMEYMPGGSVKDQLKAYGALTESVTRKYTRQILEGMSYLHSNMIVHRDIKGANILRDSAGNVKLGDFGASKRLQTICMSGTGIRSVTGTPYWMSPEVISGEGYGRKADVWSLGCTVVEMLTEKPPWAEYEAMAAIFKIATQPTNPQLPSHISEHGRDFLRRIFVEARQRPSAEELLTHHFAQLVY.

A PB1 domain is found at 44–123 (DVRIKFEHNG…KSLRILLLSQ (80 aa)). Disordered stretches follow at residues 125–184 (RNHT…YVPE) and 218–273 (SSAE…VKGG). Composition is skewed to polar residues over residues 128–137 (TSSSPHSGVS), 144–155 (PSQSAGDINTIY), 165–174 (LSVSSQNPGR), and 219–247 (SAEN…QMSR). Phosphoserine occurs at positions 147 and 166. Residues S250 and S312 each carry the phosphoserine modification. Over residues 250–270 (SFPDNRKECSDRETQLYDKGV) the composition is skewed to basic and acidic residues. S337 is modified (phosphoserine; by SGK1). S340 is modified (phosphoserine). The region spanning 362 to 622 (WRRGKLLGQG…AEELLTHHFA (261 aa)) is the Protein kinase domain. Residues 368-376 (LGQGAFGRV) and K391 each bind ATP. Catalysis depends on D489, which acts as the Proton acceptor.

Belongs to the protein kinase superfamily. STE Ser/Thr protein kinase family. MAP kinase kinase kinase subfamily. Binds both upstream activators and downstream substrates in multimolecular complexes. Part of a complex with MAP2K3, RAC1 and CCM2. Interacts with MAP2K5 and SPAG9. It depends on Mg(2+) as a cofactor. In terms of processing, phosphorylation at Ser-166 and Ser-337 by SGK1 inhibits its activity.

It carries out the reaction L-seryl-[protein] + ATP = O-phospho-L-seryl-[protein] + ADP + H(+). The enzyme catalyses L-threonyl-[protein] + ATP = O-phospho-L-threonyl-[protein] + ADP + H(+). Activated by phosphorylation on Thr-530. Its function is as follows. Component of a protein kinase signal transduction cascade. Mediates activation of the NF-kappa-B, AP1 and DDIT3 transcriptional regulators. This is Mitogen-activated protein kinase kinase kinase 3 (Map3k3) from Mus musculus (Mouse).